Reading from the N-terminus, the 200-residue chain is ATP-dependent Clp protease proteolytic subunit (200 aa).

The active-site Nucleophile is serine 96. The active site involves histidine 121.

The protein belongs to the peptidase S14 family. Fourteen ClpP subunits assemble into 2 heptameric rings which stack back to back to give a disk-like structure with a central cavity, resembling the structure of eukaryotic proteasomes.

Its subcellular location is the cytoplasm. The catalysed reaction is Hydrolysis of proteins to small peptides in the presence of ATP and magnesium. alpha-casein is the usual test substrate. In the absence of ATP, only oligopeptides shorter than five residues are hydrolyzed (such as succinyl-Leu-Tyr-|-NHMec, and Leu-Tyr-Leu-|-Tyr-Trp, in which cleavage of the -Tyr-|-Leu- and -Tyr-|-Trp bonds also occurs).. Functionally, cleaves peptides in various proteins in a process that requires ATP hydrolysis. Has a chymotrypsin-like activity. Plays a major role in the degradation of misfolded proteins. The polypeptide is ATP-dependent Clp protease proteolytic subunit (Leuconostoc citreum (strain KM20)).